The chain runs to 277 residues: 3-methyl-2-oxobutanoate hydroxymethyltransferase (277 aa).

Residues aspartate 49 and aspartate 88 each coordinate Mg(2+). 3-methyl-2-oxobutanoate contacts are provided by residues 49–50, aspartate 88, and lysine 118; that span reads DS. Glutamate 120 is a Mg(2+) binding site. Catalysis depends on glutamate 186, which acts as the Proton acceptor.

The protein belongs to the PanB family. As to quaternary structure, homodecamer; pentamer of dimers. It depends on Mg(2+) as a cofactor.

The protein localises to the cytoplasm. The catalysed reaction is 3-methyl-2-oxobutanoate + (6R)-5,10-methylene-5,6,7,8-tetrahydrofolate + H2O = 2-dehydropantoate + (6S)-5,6,7,8-tetrahydrofolate. The protein operates within cofactor biosynthesis; (R)-pantothenate biosynthesis; (R)-pantoate from 3-methyl-2-oxobutanoate: step 1/2. Its function is as follows. Catalyzes the reversible reaction in which hydroxymethyl group from 5,10-methylenetetrahydrofolate is transferred onto alpha-ketoisovalerate to form ketopantoate. This Cereibacter sphaeroides (strain ATCC 17025 / ATH 2.4.3) (Rhodobacter sphaeroides) protein is 3-methyl-2-oxobutanoate hydroxymethyltransferase.